A 1516-amino-acid chain; its full sequence is Myosin-14 (1516 aa).

The Myosin N-terminal SH3-like domain occupies Asn7 to Val56. The 678-residue stretch at Ser61–Asn738 folds into the Myosin motor domain. ATP contacts are provided by residues Gly155–Thr162 and Asn208–Lys216. 4 actin-binding regions span residues Leu494 to Phe528, Asp530 to Val553, Phe588 to Leu612, and Leu612 to Asn634. IQ domains follow at residues Leu741 to Asn770, Leu764 to Val793, Arg789 to Ser818, Leu812 to Ala841, Gln837 to Thr866, and Leu860 to Glu889. Positions Thr890–Leu1056 form a coiled coil. The segment at Gly1061–Gly1085 is disordered. Over residues Lys1069–Asn1084 the composition is skewed to polar residues. One can recognise a Dilute domain in the interval Asp1158–Glu1463.

It belongs to the TRAFAC class myosin-kinesin ATPase superfamily. Myosin family. Plant myosin class XI subfamily. In terms of assembly, homodimer.

Its function is as follows. Myosin heavy chain that is required for the cell cycle-regulated transport of various organelles and proteins for their segregation. Functions by binding with its tail domain to receptor proteins on organelles and exerting force with its N-terminal motor domain against actin filaments, thereby transporting its cargo along polarized actin cables. This is Myosin-14 (XI-H) from Arabidopsis thaliana (Mouse-ear cress).